Here is a 233-residue protein sequence, read N- to C-terminus: Synaptogyrin-4 (233 aa).

In terms of domain architecture, MARVEL spans 18–169 (FLRRPKSISR…QAYLAFQDLR (152 aa)). 4 helical membrane passes run 25–45 (ISRIFGGVFSLVIFSSLLTDG), 66–86 (CSFAVGAGFLSFLSCLVFLAI), 104–124 (LLDFILAVLWAGVWFVAFCFL), and 145–165 (AAIALSFFSVPVWILQAYLAF). Positions 191–233 (SPSSTSPSNPPITGPNSLSYTSSALSPYMTTPKAPRLAMMPDS) are disordered. The segment covering 204–219 (GPNSLSYTSSALSPYM) has biased composition (polar residues).

The protein belongs to the synaptogyrin family.

Its subcellular location is the membrane. This is Synaptogyrin-4 (Syngr4) from Mus musculus (Mouse).